A 316-amino-acid chain; its full sequence is Ribose-phosphate pyrophosphokinase (316 aa).

Residues 41-43 (DGE) and 100-101 (RQ) contribute to the ATP site. The Mg(2+) site is built by His-134 and Asp-174. Residue Lys-197 is part of the active site. D-ribose 5-phosphate-binding positions include Arg-199, Asp-223, and 227 to 231 (DTAGT).

The protein belongs to the ribose-phosphate pyrophosphokinase family. Class I subfamily. As to quaternary structure, homohexamer. Mg(2+) serves as cofactor.

Its subcellular location is the cytoplasm. The enzyme catalyses D-ribose 5-phosphate + ATP = 5-phospho-alpha-D-ribose 1-diphosphate + AMP + H(+). It participates in metabolic intermediate biosynthesis; 5-phospho-alpha-D-ribose 1-diphosphate biosynthesis; 5-phospho-alpha-D-ribose 1-diphosphate from D-ribose 5-phosphate (route I): step 1/1. In terms of biological role, involved in the biosynthesis of the central metabolite phospho-alpha-D-ribosyl-1-pyrophosphate (PRPP) via the transfer of pyrophosphoryl group from ATP to 1-hydroxyl of ribose-5-phosphate (Rib-5-P). The polypeptide is Ribose-phosphate pyrophosphokinase (Caldanaerobacter subterraneus subsp. tengcongensis (strain DSM 15242 / JCM 11007 / NBRC 100824 / MB4) (Thermoanaerobacter tengcongensis)).